Here is a 185-residue protein sequence, read N- to C-terminus: Intraflagellar transport protein 22 homolog (185 aa).

Residues 10–17, 63–67, and 123–126 each bind GTP; these read GPCESGKT, DCGGD, and HKPG. Residue Ser-137 is modified to Phosphoserine.

Belongs to the small GTPase superfamily. Rab family. In terms of assembly, component of the IFT complex B, at least composed of IFT20, IFT22, IFT25, IFT27, IFT46, IFT52, TRAF3IP1/IFT54, IFT57, IFT74, IFT80, IFT81, and IFT88. Interacts with IFT88. Interacts with CFAP61.

Its subcellular location is the cell projection. It is found in the cilium. In terms of biological role, small GTPase-like component of the intraflagellar transport (IFT) complex B. The sequence is that of Intraflagellar transport protein 22 homolog (Ift22) from Rattus norvegicus (Rat).